The primary structure comprises 339 residues: Lipoate--protein ligase (339 aa).

Positions 31–221 (FLDDDILFPY…QLLQIETISQ (191 aa)) constitute a BPL/LPL catalytic domain. ATP contacts are provided by residues Arg73, 78-81 (GAVY), Lys135, and Ala139. Lys135 contacts (R)-lipoate.

The protein belongs to the LplA family.

It carries out the reaction L-lysyl-[lipoyl-carrier protein] + (R)-lipoate + ATP = N(6)-[(R)-lipoyl]-L-lysyl-[lipoyl-carrier protein] + AMP + diphosphate + H(+). Its pathway is protein modification; protein lipoylation via exogenous pathway; protein N(6)-(lipoyl)lysine from lipoate: step 1/2. The protein operates within protein modification; protein lipoylation via exogenous pathway; protein N(6)-(lipoyl)lysine from lipoate: step 2/2. Catalyzes specifically the lipoylation of GcvH-L (SpyM50867), likely via the ATP-dependent activation of lipoate to lipoyl-AMP and the transfer of the activated lipoyl onto the lipoyl domain of the target protein. This Streptococcus pyogenes serotype M5 (strain Manfredo) protein is Lipoate--protein ligase.